The following is a 361-amino-acid chain: Phospho-N-acetylmuramoyl-pentapeptide-transferase (361 aa).

Helical transmembrane passes span 25 to 45, 73 to 93, 98 to 118, 139 to 159, 168 to 188, 200 to 220, 237 to 257, 264 to 284, 289 to 309, and 339 to 359; these read RGIL…PAVI, TMGG…WGDL, VWLV…DDWI, IFGL…AAIT, IALP…IVGF, GLAI…AYAS, AGEL…FLWF, VFMG…VAVI, LVLV…MIQV, and VIVR…ATLK.

It belongs to the glycosyltransferase 4 family. MraY subfamily. Mg(2+) serves as cofactor.

Its subcellular location is the cell inner membrane. The enzyme catalyses UDP-N-acetyl-alpha-D-muramoyl-L-alanyl-gamma-D-glutamyl-meso-2,6-diaminopimeloyl-D-alanyl-D-alanine + di-trans,octa-cis-undecaprenyl phosphate = di-trans,octa-cis-undecaprenyl diphospho-N-acetyl-alpha-D-muramoyl-L-alanyl-D-glutamyl-meso-2,6-diaminopimeloyl-D-alanyl-D-alanine + UMP. The protein operates within cell wall biogenesis; peptidoglycan biosynthesis. Functionally, catalyzes the initial step of the lipid cycle reactions in the biosynthesis of the cell wall peptidoglycan: transfers peptidoglycan precursor phospho-MurNAc-pentapeptide from UDP-MurNAc-pentapeptide onto the lipid carrier undecaprenyl phosphate, yielding undecaprenyl-pyrophosphoryl-MurNAc-pentapeptide, known as lipid I. This Xanthomonas campestris pv. campestris (strain 8004) protein is Phospho-N-acetylmuramoyl-pentapeptide-transferase.